Consider the following 55-residue polypeptide: Large ribosomal subunit protein bL33 (55 aa).

The protein belongs to the bacterial ribosomal protein bL33 family.

In Bradyrhizobium sp. (strain BTAi1 / ATCC BAA-1182), this protein is Large ribosomal subunit protein bL33.